Consider the following 177-residue polypeptide: Peptide methionine sulfoxide reductase MsrA (177 aa).

Cys15 is a catalytic residue.

This sequence belongs to the MsrA Met sulfoxide reductase family.

It catalyses the reaction L-methionyl-[protein] + [thioredoxin]-disulfide + H2O = L-methionyl-(S)-S-oxide-[protein] + [thioredoxin]-dithiol. It carries out the reaction [thioredoxin]-disulfide + L-methionine + H2O = L-methionine (S)-S-oxide + [thioredoxin]-dithiol. Its function is as follows. Has an important function as a repair enzyme for proteins that have been inactivated by oxidation. Catalyzes the reversible oxidation-reduction of methionine sulfoxide in proteins to methionine. In Listeria monocytogenes serotype 4a (strain HCC23), this protein is Peptide methionine sulfoxide reductase MsrA.